We begin with the raw amino-acid sequence, 641 residues long: Methionine--tRNA ligase (641 aa).

Residues 13–23 carry the 'HIGH' region motif; sequence YYPSAKLHIGN. Residues C128, C131, C145, and C148 each coordinate Zn(2+). A 'KMSKS' region motif is present at residues 298-302; it reads KMSKS. K301 is an ATP binding site. Positions 539–641 constitute a tRNA-binding domain; it reads DFDKIDLRVV…GELPTGSQVR (103 aa).

Belongs to the class-I aminoacyl-tRNA synthetase family. MetG type 2A subfamily. In terms of assembly, homodimer. Zn(2+) serves as cofactor.

The protein localises to the cytoplasm. It catalyses the reaction tRNA(Met) + L-methionine + ATP = L-methionyl-tRNA(Met) + AMP + diphosphate. Functionally, is required not only for elongation of protein synthesis but also for the initiation of all mRNA translation through initiator tRNA(fMet) aminoacylation. The protein is Methionine--tRNA ligase of Clostridium tetani (strain Massachusetts / E88).